Here is a 287-residue protein sequence, read N- to C-terminus: Large ribosomal subunit protein uL2 (287 aa).

Residues 221 to 287 (RGSVMNPCDH…SKRSRGGRDS (67 aa)) are disordered. A compositionally biased stretch (basic residues) spans 258–287 (KTRKKNKPSNKLVVRRRRRISKRSRGGRDS).

Belongs to the universal ribosomal protein uL2 family. Part of the 50S ribosomal subunit. Forms a bridge to the 30S subunit in the 70S ribosome.

Functionally, one of the primary rRNA binding proteins. Required for association of the 30S and 50S subunits to form the 70S ribosome, for tRNA binding and peptide bond formation. It has been suggested to have peptidyltransferase activity; this is somewhat controversial. Makes several contacts with the 16S rRNA in the 70S ribosome. This Prochlorococcus marinus (strain MIT 9312) protein is Large ribosomal subunit protein uL2.